The following is a 240-amino-acid chain: Mitochondrial inner membrane protease ATP23 (240 aa).

Residue His140 participates in a divalent metal cation binding. Glu141 is an active-site residue. His144 serves as a coordination point for a divalent metal cation.

It belongs to the peptidase M76 family.

It is found in the mitochondrion inner membrane. In terms of biological role, has a dual role in the assembly of mitochondrial ATPase. Acts as a protease that removes N-terminal residues of mitochondrial ATPase CF(0) subunit 6 at the intermembrane space side. Also involved in the correct assembly of the membrane-embedded ATPase CF(0) particle, probably mediating association of subunit 6 with the subunit 9 ring. This is Mitochondrial inner membrane protease ATP23 (ATP23) from Scheffersomyces stipitis (strain ATCC 58785 / CBS 6054 / NBRC 10063 / NRRL Y-11545) (Yeast).